Consider the following 233-residue polypeptide: UPF0758 protein RoseRS_0767 (233 aa).

The 123-residue stretch at 107-229 (LIRSPTDAAQ…FVSMRERGLG (123 aa)) folds into the MPN domain. Residues histidine 178, histidine 180, and aspartate 191 each contribute to the Zn(2+) site. The JAMM motif motif lies at 178–191 (HNHPSGDPTPSPED).

Belongs to the UPF0758 family.

This is UPF0758 protein RoseRS_0767 from Roseiflexus sp. (strain RS-1).